Reading from the N-terminus, the 470-residue chain is Retinoic acid receptor RXR-gamma (470 aa).

Residues 1 to 145 (MHLATETAPS…NSPGALTKHI (145 aa)) form a modulating region. 2 NR C4-type zinc fingers span residues 146–166 (CAICGDRSSGKHYGVYSCEGC) and 182–206 (CRDSKDCLIDKRQRNRCQYCRYQKC). Residues 146–211 (CAICGDRSSG…RYQKCLAMGM (66 aa)) constitute a DNA-binding region (nuclear receptor). Residues 212–235 (KREAVQEERQRSREKSDTEAESTS) form a hinge region. Over residues 217–229 (QEERQRSREKSDT) the composition is skewed to basic and acidic residues. The tract at residues 217 to 242 (QEERQRSREKSDTEAESTSSTSEEMP) is disordered. Residues 238 to 466 (SEEMPVERIL…TFLMEMLETP (229 aa)) enclose the NR LBD domain.

Belongs to the nuclear hormone receptor family. NR2 subfamily. Homodimer. Heterodimer; with a rar molecule. Binds DNA preferentially as a rar/rxr heterodimer.

The protein localises to the nucleus. Its function is as follows. Receptor for retinoic acid. Retinoic acid receptors bind as heterodimers to their target response elements in response to their ligands, all-trans or 9-cis retinoic acid, and regulate gene expression in various biological processes. The rar/rxr heterodimers bind to the retinoic acid response elements (RARE) composed of tandem 5'-AGGTCA-3' sites known as DR1-DR5. The high affinity ligand for rxrs is 9-cis retinoic acid. This is Retinoic acid receptor RXR-gamma (rxrg) from Xenopus laevis (African clawed frog).